Reading from the N-terminus, the 498-residue chain is RuvB-like helicase 2 (498 aa).

An ATP-binding site is contributed by 79–86; the sequence is GPPSTGKT. Residues 458-498 form a disordered region; it reads VTIGQESTDGSTQPQAKQQEVAQPEATQPQSQPEDDKMETD. Residues 461–489 show a composition bias toward polar residues; sequence GQESTDGSTQPQAKQQEVAQPEATQPQSQ.

The protein belongs to the RuvB family. In terms of assembly, may form heterododecamers with RVB1. Component of the SWR1 chromatin remodeling complex, the INO80 chromatin remodeling complex, and of the R2TP complex.

It localises to the nucleus. It carries out the reaction ATP + H2O = ADP + phosphate + H(+). Its function is as follows. DNA helicase which participates in several chromatin remodeling complexes, including the SWR1 and the INO80 complexes. The SWR1 complex mediates the ATP-dependent exchange of histone H2A for the H2A variant HZT1 leading to transcriptional regulation of selected genes by chromatin remodeling. The INO80 complex remodels chromatin by shifting nucleosomes and is involved in DNA repair. Also involved in pre-rRNA processing. This Candida albicans (strain SC5314 / ATCC MYA-2876) (Yeast) protein is RuvB-like helicase 2 (RVB2).